A 516-amino-acid polypeptide reads, in one-letter code: Serine carboxypeptidase II-3 (516 aa).

A signal peptide spans 1–20; the sequence is MKCTVVALVLLVAVQCLVLG. A propeptide spanning residues 21–77 is cleaved from the precursor; sequence AGPAAAAKARRTRQGDYLNRLRGSPSSRASWESLAAVEEQTTTKAAGRPAPVAAAVE. Cystine bridges form between C143/C391, C300/C315, and C339/C359. N-linked (GlcNAc...) asparagine glycosylation is found at N194 and N205. The active site involves S236. N-linked (GlcNAc...) asparagine glycosylation is present at N301. A propeptide spans 342 to 352 (linker peptide); it reads EKLVTPPIAPS. An N-linked (GlcNAc...) asparagine glycan is attached at N380. Active-site residues include D427 and H484.

The protein belongs to the peptidase S10 family. Carboxypeptidase II is a dimer, where each monomer is composed of two chains linked by a disulfide bond. Post-translationally, the linker peptide is endoproteolytically excised during enzyme maturation.

The catalysed reaction is Preferential release of a C-terminal arginine or lysine residue.. The sequence is that of Serine carboxypeptidase II-3 (CXP;2-3) from Hordeum vulgare (Barley).